Consider the following 378-residue polypeptide: MANEPAIGAIDRLQRSSRDVTTLPAVISRWLSSVLPGGAAPEVTVESGVDSTGMSSETIILTARWQQDGRSIQQKLVARVAPAAEDVPVFPTYRLDHQFEVIRLVGELTDVPVPRVRWIETTGDVLGTPFFLMDYVEGVVPPDVMPYTFGDNWFADAPAERQRQLQDATVAALATLHSIPNAQNTFSFLTQGRTSDTTLHRHFNWVRSWYDFAVEGIGRSPLLERTFEWLQSHWPDDAAAREPVLLWGDARVGNVLYRDFQPVAVLDWEMVALGPRELDVAWMIFAHRVFQELAGLATLPGLPEVMREDDVRATYQALTGVELGDLHWFYVYSGVMWACVFMRTGARRVHFGEIEKPDDVESLFYHAGLMKHLLGEEH.

ATP-binding positions include Arg-79 and 134 to 136; that span reads DYV. Residue Asp-249 is the Proton acceptor of the active site. 3 residues coordinate Mg(2+): Asn-254, Asp-267, and Glu-269.

Belongs to the aminoglycoside phosphotransferase family.

Functionally, might catalyze the phosphorylation of aminoglycosides and confer aminoglycoside antibiotics resistance. The chain is Putative aminoglycoside phosphotransferase from Mycobacterium tuberculosis (strain CDC 1551 / Oshkosh).